Reading from the N-terminus, the 119-residue chain is Phosphoribosyl-AMP cyclohydrolase (119 aa).

Mg(2+) is bound at residue aspartate 72. Cysteine 73 is a Zn(2+) binding site. Mg(2+) contacts are provided by aspartate 74 and aspartate 76. Zn(2+)-binding residues include cysteine 89 and cysteine 96.

Belongs to the PRA-CH family. Homodimer. Mg(2+) is required as a cofactor. The cofactor is Zn(2+).

Its subcellular location is the cytoplasm. The enzyme catalyses 1-(5-phospho-beta-D-ribosyl)-5'-AMP + H2O = 1-(5-phospho-beta-D-ribosyl)-5-[(5-phospho-beta-D-ribosylamino)methylideneamino]imidazole-4-carboxamide. It functions in the pathway amino-acid biosynthesis; L-histidine biosynthesis; L-histidine from 5-phospho-alpha-D-ribose 1-diphosphate: step 3/9. Catalyzes the hydrolysis of the adenine ring of phosphoribosyl-AMP. In Methanocella arvoryzae (strain DSM 22066 / NBRC 105507 / MRE50), this protein is Phosphoribosyl-AMP cyclohydrolase.